The sequence spans 106 residues: Phosphoribosyl-ATP pyrophosphatase (106 aa).

The protein belongs to the PRA-PH family.

The protein resides in the cytoplasm. It catalyses the reaction 1-(5-phospho-beta-D-ribosyl)-ATP + H2O = 1-(5-phospho-beta-D-ribosyl)-5'-AMP + diphosphate + H(+). It participates in amino-acid biosynthesis; L-histidine biosynthesis; L-histidine from 5-phospho-alpha-D-ribose 1-diphosphate: step 2/9. The sequence is that of Phosphoribosyl-ATP pyrophosphatase from Geotalea daltonii (strain DSM 22248 / JCM 15807 / FRC-32) (Geobacter daltonii).